Reading from the N-terminus, the 569-residue chain is MKTTATSFVTGERVVVFVVVSRILLSLPLSLISHGFSLFLLSLSAFLVEIRVETSPFLLSHFSSRRGASSGILLGAVTLPSVMISKLVQLSRAISIHEAEQDELAHVTMQYWAASASCCAILIYLSVIMSQVRKDESLSSSSIWLTRVSLTGTVLYGVACFVSLSMISHTGLNTSLKMLWMLFHGLAAVKLIRHLLCTFPSCASIGEALLVTSGLVLYFGDFLACTIAKIFEKLIPVDLVSISYGIKRTETGIIVQGLLLGLLLFPMVFRFVLHIYESSLRKRDARQRNCSDAAKSVLFFVSLLFFMVVAVPSWMQFVHDFNQHPFLWVLTFVFSEPLKRLSLCIYWILLIVVSVSRFYNISRSSKVERILLRKYYHLMAVLMFLPALVLQPKFLDLAFGAALAVFVALEIIRIWRIQPLGEPLHQFMNAFTDHRDSEHLIVSHFSLLLGCALPIWMSSGFNDRALSPFAGILSLGIGDTMASMVGHKYGVLRWSKTGKKTVEGTAAGITSMMAVCFVLVPILASMGYILSQGWWSLLVAVTATGMLEAYTAQLDNAFIPLVFYSLLCL.

Over 1–22 (MKTTATSFVTGERVVVFVVVSR) the chain is Cytoplasmic. Residues 23–43 (ILLSLPLSLISHGFSLFLLSL) traverse the membrane as a helical segment. At 44 to 67 (SAFLVEIRVETSPFLLSHFSSRRG) the chain is on the lumenal side. Residues 68–88 (ASSGILLGAVTLPSVMISKLV) form a helical membrane-spanning segment. Over 89–108 (QLSRAISIHEAEQDELAHVT) the chain is Cytoplasmic. A helical membrane pass occupies residues 109-129 (MQYWAASASCCAILIYLSVIM). The Lumenal portion of the chain corresponds to 130–147 (SQVRKDESLSSSSIWLTR). A helical transmembrane segment spans residues 148 to 168 (VSLTGTVLYGVACFVSLSMIS). Residues 169–178 (HTGLNTSLKM) lie on the Cytoplasmic side of the membrane. A helical transmembrane segment spans residues 179-199 (LWMLFHGLAAVKLIRHLLCTF). The Lumenal segment spans residues 200–207 (PSCASIGE). A helical transmembrane segment spans residues 208–228 (ALLVTSGLVLYFGDFLACTIA). Residues 229–252 (KIFEKLIPVDLVSISYGIKRTETG) are Cytoplasmic-facing. The chain crosses the membrane as a helical span at residues 253–273 (IIVQGLLLGLLLFPMVFRFVL). Over 274-296 (HIYESSLRKRDARQRNCSDAAKS) the chain is Lumenal. Asn-289 is a glycosylation site (N-linked (GlcNAc...) asparagine). The helical transmembrane segment at 297–317 (VLFFVSLLFFMVVAVPSWMQF) threads the bilayer. At 318–340 (VHDFNQHPFLWVLTFVFSEPLKR) the chain is on the cytoplasmic side. The helical transmembrane segment at 341-361 (LSLCIYWILLIVVSVSRFYNI) threads the bilayer. The Lumenal segment spans residues 362-369 (SRSSKVER). The helical transmembrane segment at 370–390 (ILLRKYYHLMAVLMFLPALVL) threads the bilayer. Over 391–393 (QPK) the chain is Cytoplasmic. A helical transmembrane segment spans residues 394–414 (FLDLAFGAALAVFVALEIIRI). The Lumenal segment spans residues 415 to 440 (WRIQPLGEPLHQFMNAFTDHRDSEHL). The chain crosses the membrane as a helical span at residues 441-461 (IVSHFSLLLGCALPIWMSSGF). The Cytoplasmic portion of the chain corresponds to 462–464 (NDR). The chain crosses the membrane as a helical span at residues 465 to 485 (ALSPFAGILSLGIGDTMASMV). Residues 486 to 508 (GHKYGVLRWSKTGKKTVEGTAAG) are Lumenal-facing. The segment at 487–503 (HKYGVLRWSKTGKKTVE) is CTP-binding. Residues 509-529 (ITSMMAVCFVLVPILASMGYI) form a helical membrane-spanning segment. Topologically, residues 530 to 548 (LSQGWWSLLVAVTATGMLE) are cytoplasmic. A helical membrane pass occupies residues 549-569 (AYTAQLDNAFIPLVFYSLLCL).

It belongs to the polyprenol kinase family.

It localises to the endoplasmic reticulum membrane. The catalysed reaction is a di-trans,poly-cis-dolichol + CTP = a di-trans,poly-cis-dolichyl phosphate + CDP + H(+). Its function is as follows. Essential for pollen development. Involved in protein N-glycosylation in the endoplasmic reticulum (ER), especially in the female gametophyte. Mediates pollen tube (PT) reception in synergids through protein glycosylation. The sequence is that of Dolichol kinase EVAN from Arabidopsis thaliana (Mouse-ear cress).